We begin with the raw amino-acid sequence, 456 residues long: UDP-N-acetylglucosamine 1-carboxyvinyltransferase (456 aa).

Residue 34–35 (KN) coordinates phosphoenolpyruvate. Arg104 contributes to the UDP-N-acetyl-alpha-D-glucosamine binding site. Cys128 (proton donor) is an active-site residue. Position 128 is a 2-(S-cysteinyl)pyruvic acid O-phosphothioketal (Cys128). Positions 319 and 341 each coordinate UDP-N-acetyl-alpha-D-glucosamine.

This sequence belongs to the EPSP synthase family. MurA subfamily.

It is found in the cytoplasm. The catalysed reaction is phosphoenolpyruvate + UDP-N-acetyl-alpha-D-glucosamine = UDP-N-acetyl-3-O-(1-carboxyvinyl)-alpha-D-glucosamine + phosphate. It participates in cell wall biogenesis; peptidoglycan biosynthesis. Functionally, cell wall formation. Adds enolpyruvyl to UDP-N-acetylglucosamine. The sequence is that of UDP-N-acetylglucosamine 1-carboxyvinyltransferase from Prochlorococcus marinus (strain MIT 9301).